The chain runs to 295 residues: Non-selective voltage-gated ion channel VDAC2 (295 aa).

Residues Lys24 and Lys32 each coordinate ATP. Lys32 carries the N6-acetyllysine; alternate modification. Lys32 is modified (N6-succinyllysine; alternate). A Glycyl lysine isopeptide (Lys-Gly) (interchain with G-Cter in ubiquitin); alternate cross-link involves residue Lys32. Transmembrane regions (beta stranded) follow at residues 38 to 45 and 51 to 60; these read LVKLDVKT and VEFSTSGSSN. Residue Lys65 forms a Glycyl lysine isopeptide (Lys-Gly) (interchain with G-Cter in ubiquitin) linkage. Residues 66-76 form a beta stranded membrane-spanning segment; it reads VSGTLETKYKW. The residue at position 79 (Tyr79) is a Phosphotyrosine. Beta stranded transmembrane passes span 81-88, 92-100, and 107-116; these read LTFTEKWN, TLGTEIAIE, and LKLTFDTTFS. Thr119 bears the Phosphothreonine mark. Lys121 bears the N6-acetyllysine; alternate mark. Lys121 participates in a covalent cross-link: Glycyl lysine isopeptide (Lys-Gly) (interchain with G-Cter in ubiquitin); alternate. A Glycyl lysine isopeptide (Lys-Gly) (interchain with G-Cter in ubiquitin) cross-link involves residue Lys122. 4 consecutive transmembrane segments (beta stranded) span residues 122–131, 135–144, 148–157, and 161–170; these read KSGKIKSAYK, INLGCDVDFD, PAIHGSAVFG, and WLAGYQMTFD. A Glycyl lysine isopeptide (Lys-Gly) (interchain with G-Cter in ubiquitin) cross-link involves residue Lys173. The next 6 beta stranded transmembrane spans lie at 177-187, 190-197, 201-210, 214-222, 229-238, and 243-250; these read TRSNFAVGYRT, FQLHTNVN, EFGGSIYQKV, FDTSVNLAW, TRFGIAAKYQ, and ASISAKVN. Position 252 is a phosphoserine (Ser252). NAD(+) contacts are provided by residues 254-256 and 272-276; these read LIG and SALVD. The next 2 membrane-spanning stretches (beta stranded) occupy residues 254–263 and 267–275; these read LIGVGYTQTL and VKLTLSALV. At Lys278 the chain carries N6-acetyllysine; alternate. Lys278 participates in a covalent cross-link: Glycyl lysine isopeptide (Lys-Gly) (interchain with G-Cter in ubiquitin); alternate. Residues 285 to 295 traverse the membrane as a beta stranded segment; the sequence is HKLGLALELEA.

Belongs to the eukaryotic mitochondrial porin family. Monomer, homodimer and higher order oligomers; formation of higher order structures is necessary for scramblase activity. Interacts with ARMC12 in a TBC1D21-dependent manner. Interacts with KLC3. Interacts with SPATA33. Interacts with PPP3CC in a SPATA33-dependent manner. Ubiquitinated by PRKN during mitophagy, leading to its degradation and enhancement of mitophagy. Deubiquitinated by USP30. As to expression, highest levels of expression detected in testis, less but still abundant expression in heart, kidney, brain, and skeletal muscle. Expressed in the sperm midpiece (at protein level).

It is found in the mitochondrion outer membrane. Its subcellular location is the membrane. It carries out the reaction chloride(in) = chloride(out). The enzyme catalyses K(+)(in) = K(+)(out). It catalyses the reaction a 1,2-diacyl-sn-glycero-3-phospho-L-serine(in) = a 1,2-diacyl-sn-glycero-3-phospho-L-serine(out). The catalysed reaction is a 1,2-diacyl-sn-glycero-3-phosphocholine(in) = a 1,2-diacyl-sn-glycero-3-phosphocholine(out). It carries out the reaction a 1,2-diacyl-sn-glycero-3-phospho-(1D-myo-inositol)(in) = a 1,2-diacyl-sn-glycero-3-phospho-(1D-myo-inositol)(out). Non-selective voltage-gated ion channel that mediates the transport of anions and cations through the mitochondrion outer membrane and plasma membrane. The channel adopts an open conformation at zero mV and a closed conformation at both positive and negative potentials. There are two populations of channels; the main that functions in a lower open-state conductance with lower ion selectivity, that switch, in a voltage-dependent manner, from the open to a low-conducting 'closed' state and the other that has a normal ion selectivity in the typical high conductance, 'open' state. Binds various lipids, including the sphingolipid ceramide, the phospholipid phosphatidylcholine, and the sterols cholesterol and oxysterol. Binding of ceramide promotes the mitochondrial outer membrane permeabilization (MOMP) apoptotic pathway. Functionally, catalyzes the scrambling of phospholipids across the outer mitochondrial membrane; the mechanism is unrelated to channel activity and is capable of translocating both anionic and zwitterionic phospholipids. The polypeptide is Non-selective voltage-gated ion channel VDAC2 (Mus musculus (Mouse)).